Reading from the N-terminus, the 219-residue chain is Thymidylate kinase (219 aa).

ATP is bound at residue glycine 7 to threonine 14.

It belongs to the thymidylate kinase family.

The enzyme catalyses dTMP + ATP = dTDP + ADP. Its function is as follows. Phosphorylation of dTMP to form dTDP in both de novo and salvage pathways of dTTP synthesis. The protein is Thymidylate kinase of Anaplasma phagocytophilum (strain HZ).